Here is a 308-residue protein sequence, read N- to C-terminus: Elongation factor Ts (308 aa).

The interval 79-82 (TDFV) is involved in Mg(2+) ion dislocation from EF-Tu.

This sequence belongs to the EF-Ts family.

It is found in the cytoplasm. Its function is as follows. Associates with the EF-Tu.GDP complex and induces the exchange of GDP to GTP. It remains bound to the aminoacyl-tRNA.EF-Tu.GTP complex up to the GTP hydrolysis stage on the ribosome. The polypeptide is Elongation factor Ts (Bdellovibrio bacteriovorus (strain ATCC 15356 / DSM 50701 / NCIMB 9529 / HD100)).